Consider the following 425-residue polypeptide: Tol-Pal system protein TolB (425 aa).

Residues 1 to 22 (MRNFLYCTGVLLLLWMSTSSQA) form the signal peptide.

Belongs to the TolB family. In terms of assembly, the Tol-Pal system is composed of five core proteins: the inner membrane proteins TolA, TolQ and TolR, the periplasmic protein TolB and the outer membrane protein Pal. They form a network linking the inner and outer membranes and the peptidoglycan layer.

It is found in the periplasm. Functionally, part of the Tol-Pal system, which plays a role in outer membrane invagination during cell division and is important for maintaining outer membrane integrity. This Nitrosomonas europaea (strain ATCC 19718 / CIP 103999 / KCTC 2705 / NBRC 14298) protein is Tol-Pal system protein TolB.